A 430-amino-acid chain; its full sequence is 3-phosphoshikimate 1-carboxyvinyltransferase (430 aa).

3-phosphoshikimate contacts are provided by Lys23, Ser24, and Arg28. Lys23 is a phosphoenolpyruvate binding site. The phosphoenolpyruvate site is built by Gly95 and Arg123. Residues Ser169, Gln171, Asp315, and Lys342 each contribute to the 3-phosphoshikimate site. Gln171 is a phosphoenolpyruvate binding site. The active-site Proton acceptor is Asp315. Residues Arg346 and Arg388 each contribute to the phosphoenolpyruvate site.

It belongs to the EPSP synthase family. In terms of assembly, monomer.

It is found in the cytoplasm. The enzyme catalyses 3-phosphoshikimate + phosphoenolpyruvate = 5-O-(1-carboxyvinyl)-3-phosphoshikimate + phosphate. It functions in the pathway metabolic intermediate biosynthesis; chorismate biosynthesis; chorismate from D-erythrose 4-phosphate and phosphoenolpyruvate: step 6/7. Its function is as follows. Catalyzes the transfer of the enolpyruvyl moiety of phosphoenolpyruvate (PEP) to the 5-hydroxyl of shikimate-3-phosphate (S3P) to produce enolpyruvyl shikimate-3-phosphate and inorganic phosphate. This Streptococcus pyogenes serotype M1 protein is 3-phosphoshikimate 1-carboxyvinyltransferase.